The chain runs to 378 residues: Ribosomal RNA large subunit methyltransferase G (378 aa).

It belongs to the methyltransferase superfamily. RlmG family.

The protein resides in the cytoplasm. It catalyses the reaction guanosine(1835) in 23S rRNA + S-adenosyl-L-methionine = N(2)-methylguanosine(1835) in 23S rRNA + S-adenosyl-L-homocysteine + H(+). Specifically methylates the guanine in position 1835 (m2G1835) of 23S rRNA. The sequence is that of Ribosomal RNA large subunit methyltransferase G from Escherichia coli O9:H4 (strain HS).